Reading from the N-terminus, the 282-residue chain is Elongation factor Ts (282 aa).

The involved in Mg(2+) ion dislocation from EF-Tu stretch occupies residues 80–83 (TDFV).

This sequence belongs to the EF-Ts family.

It is found in the cytoplasm. Its function is as follows. Associates with the EF-Tu.GDP complex and induces the exchange of GDP to GTP. It remains bound to the aminoacyl-tRNA.EF-Tu.GTP complex up to the GTP hydrolysis stage on the ribosome. The chain is Elongation factor Ts from Chlamydia trachomatis serovar A (strain ATCC VR-571B / DSM 19440 / HAR-13).